The primary structure comprises 192 residues: 7-methyl-GTP pyrophosphatase (192 aa).

The active-site Proton acceptor is Asp69.

It belongs to the Maf family. YceF subfamily. The cofactor is a divalent metal cation.

The protein localises to the cytoplasm. The enzyme catalyses N(7)-methyl-GTP + H2O = N(7)-methyl-GMP + diphosphate + H(+). In terms of biological role, nucleoside triphosphate pyrophosphatase that hydrolyzes 7-methyl-GTP (m(7)GTP). May have a dual role in cell division arrest and in preventing the incorporation of modified nucleotides into cellular nucleic acids. The protein is 7-methyl-GTP pyrophosphatase of Pseudomonas savastanoi pv. phaseolicola (strain 1448A / Race 6) (Pseudomonas syringae pv. phaseolicola (strain 1448A / Race 6)).